Consider the following 114-residue polypeptide: T cell receptor beta variable 6-6 (114 aa).

Positions 1–21 (MSISLLCCAAFPLLWAGPVNA) are cleaved as a signal peptide. Residues 22–114 (GVTQTPKFRI…TSVYFCASSY (93 aa)) enclose the Ig-like domain. Cys42 and Cys110 are joined by a disulfide. Asn84 carries N-linked (GlcNAc...) asparagine glycosylation.

Alpha-beta TR is a heterodimer composed of an alpha and beta chain; disulfide-linked. The alpha-beta TR is associated with the transmembrane signaling CD3 coreceptor proteins to form the TR-CD3 (TcR or TCR). The assembly of alpha-beta TR heterodimers with CD3 occurs in the endoplasmic reticulum where a single alpha-beta TR heterodimer associates with one CD3D-CD3E heterodimer, one CD3G-CD3E heterodimer and one CD247 homodimer forming a stable octameric structure. CD3D-CD3E and CD3G-CD3E heterodimers preferentially associate with TR alpha and TR beta chains, respectively. The association of the CD247 homodimer is the last step of TcR assembly in the endoplasmic reticulum and is required for transport to the cell surface.

Its subcellular location is the cell membrane. Functionally, v region of the variable domain of T cell receptor (TR) beta chain that participates in the antigen recognition. Alpha-beta T cell receptors are antigen specific receptors which are essential to the immune response and are present on the cell surface of T lymphocytes. Recognize peptide-major histocompatibility (MH) (pMH) complexes that are displayed by antigen presenting cells (APC), a prerequisite for efficient T cell adaptive immunity against pathogens. Binding of alpha-beta TR to pMH complex initiates TR-CD3 clustering on the cell surface and intracellular activation of LCK that phosphorylates the ITAM motifs of CD3G, CD3D, CD3E and CD247 enabling the recruitment of ZAP70. In turn ZAP70 phosphorylates LAT, which recruits numerous signaling molecules to form the LAT signalosome. The LAT signalosome propagates signal branching to three major signaling pathways, the calcium, the mitogen-activated protein kinase (MAPK) kinase and the nuclear factor NF-kappa-B (NF-kB) pathways, leading to the mobilization of transcription factors that are critical for gene expression and essential for T cell growth and differentiation. The T cell repertoire is generated in the thymus, by V-(D)-J rearrangement. This repertoire is then shaped by intrathymic selection events to generate a peripheral T cell pool of self-MH restricted, non-autoaggressive T cells. Post-thymic interaction of alpha-beta TR with the pMH complexes shapes TR structural and functional avidity. The chain is T cell receptor beta variable 6-6 from Homo sapiens (Human).